A 233-amino-acid polypeptide reads, in one-letter code: ATP synthase subunit a, chloroplastic (233 aa).

4 consecutive transmembrane segments (helical) span residues 27–47, 84–104, 122–142, and 192–212; these read VLLI…LGTL, VPFV…GALI, DINT…YAGF, and VLCL…GIFA.

This sequence belongs to the ATPase A chain family. F-type ATPases have 2 components, CF(1) - the catalytic core - and CF(0) - the membrane proton channel. CF(1) has five subunits: alpha(3), beta(3), gamma(1), delta(1), epsilon(1). CF(0) has four main subunits: a, b, b' and c.

Its subcellular location is the plastid. It is found in the chloroplast thylakoid membrane. Its function is as follows. Key component of the proton channel; it plays a direct role in the translocation of protons across the membrane. In Ochrosphaera neapolitana, this protein is ATP synthase subunit a, chloroplastic.